The primary structure comprises 405 residues: Adenylosuccinate synthetase (405 aa).

Residues 12 to 18 (GDEGKGK) and 40 to 42 (GHT) contribute to the GTP site. D13 (proton acceptor) is an active-site residue. The Mg(2+) site is built by D13 and G40. Residues 13–16 (DEGK), 38–41 (NAGH), T121, R135, Q213, T228, and R297 each bind IMP. H41 (proton donor) is an active-site residue. Residue 293-299 (TTTGRAR) coordinates substrate. Residues R299, 325–327 (KMD), and 390–392 (SAG) each bind GTP.

Belongs to the adenylosuccinate synthetase family. As to quaternary structure, homodimer. Mg(2+) is required as a cofactor.

Its subcellular location is the cytoplasm. It catalyses the reaction IMP + L-aspartate + GTP = N(6)-(1,2-dicarboxyethyl)-AMP + GDP + phosphate + 2 H(+). The protein operates within purine metabolism; AMP biosynthesis via de novo pathway; AMP from IMP: step 1/2. In terms of biological role, plays an important role in the de novo pathway of purine nucleotide biosynthesis. Catalyzes the first committed step in the biosynthesis of AMP from IMP. The polypeptide is Adenylosuccinate synthetase (Deinococcus deserti (strain DSM 17065 / CIP 109153 / LMG 22923 / VCD115)).